We begin with the raw amino-acid sequence, 590 residues long: Protein Spindly (590 aa).

Residues 1-401 (MSDLEDEIKV…SMARMKALSE (401 aa)) adopt a coiled-coil conformation. Positions 446 to 590 (NKAQVQKRRR…KTMANECAQQ (145 aa)) are disordered. 2 stretches are compositionally biased toward basic and acidic residues: residues 483-497 (SNEKAEEKTPSHPVE) and 518-527 (RESKSVRICE). Composition is skewed to polar residues over residues 541-554 (VNDSNSKNVDQTHQ) and 572-590 (QQPTHVSSQKTMANECAQQ).

The protein belongs to the Spindly family.

The protein localises to the chromosome. It is found in the centromere. It localises to the kinetochore. Required for the localization of dynein and dynactin to the mitotic kintochore. Dynein is believed to control the initial lateral interaction between the kinetochore and spindle microtubules and to facilitate the subsequent formation of end-on kinetochore-microtubule attachments mediated by the NDC80 complex. May act as an adapter protein linking the dynein motor complex to various cargos. This is Protein Spindly (spdl1) from Danio rerio (Zebrafish).